The sequence spans 466 residues: Light-independent protochlorophyllide reductase subunit N (466 aa).

Residues cysteine 24, cysteine 49, and cysteine 109 each contribute to the [4Fe-4S] cluster site.

The protein belongs to the BchN/ChlN family. As to quaternary structure, protochlorophyllide reductase is composed of three subunits; ChlL, ChlN and ChlB. Forms a heterotetramer of two ChlB and two ChlN subunits. It depends on [4Fe-4S] cluster as a cofactor.

It catalyses the reaction chlorophyllide a + oxidized 2[4Fe-4S]-[ferredoxin] + 2 ADP + 2 phosphate = protochlorophyllide a + reduced 2[4Fe-4S]-[ferredoxin] + 2 ATP + 2 H2O. It participates in porphyrin-containing compound metabolism; chlorophyll biosynthesis (light-independent). Its function is as follows. Component of the dark-operative protochlorophyllide reductase (DPOR) that uses Mg-ATP and reduced ferredoxin to reduce ring D of protochlorophyllide (Pchlide) to form chlorophyllide a (Chlide). This reaction is light-independent. The NB-protein (ChlN-ChlB) is the catalytic component of the complex. The chain is Light-independent protochlorophyllide reductase subunit N from Synechococcus sp. (strain JA-3-3Ab) (Cyanobacteria bacterium Yellowstone A-Prime).